We begin with the raw amino-acid sequence, 236 residues long: 2-C-methyl-D-erythritol 4-phosphate cytidylyltransferase (236 aa).

It belongs to the IspD/TarI cytidylyltransferase family. IspD subfamily.

It carries out the reaction 2-C-methyl-D-erythritol 4-phosphate + CTP + H(+) = 4-CDP-2-C-methyl-D-erythritol + diphosphate. Its pathway is isoprenoid biosynthesis; isopentenyl diphosphate biosynthesis via DXP pathway; isopentenyl diphosphate from 1-deoxy-D-xylulose 5-phosphate: step 2/6. Its function is as follows. Catalyzes the formation of 4-diphosphocytidyl-2-C-methyl-D-erythritol from CTP and 2-C-methyl-D-erythritol 4-phosphate (MEP). This is 2-C-methyl-D-erythritol 4-phosphate cytidylyltransferase from Paraburkholderia phymatum (strain DSM 17167 / CIP 108236 / LMG 21445 / STM815) (Burkholderia phymatum).